A 98-amino-acid polypeptide reads, in one-letter code: NADH-ubiquinone oxidoreductase chain 4L (98 aa).

Transmembrane regions (helical) follow at residues 1-21 (MSLT…GLLM), 29-49 (ALLC…ITIL), and 61-81 (IILL…LVMV).

Belongs to the complex I subunit 4L family. Core subunit of respiratory chain NADH dehydrogenase (Complex I) which is composed of 45 different subunits.

Its subcellular location is the mitochondrion inner membrane. The enzyme catalyses a ubiquinone + NADH + 5 H(+)(in) = a ubiquinol + NAD(+) + 4 H(+)(out). Its function is as follows. Core subunit of the mitochondrial membrane respiratory chain NADH dehydrogenase (Complex I) which catalyzes electron transfer from NADH through the respiratory chain, using ubiquinone as an electron acceptor. Part of the enzyme membrane arm which is embedded in the lipid bilayer and involved in proton translocation. The chain is NADH-ubiquinone oxidoreductase chain 4L (MT-ND4L) from Rhinophylla pumilio (Dwarf little fruit bat).